We begin with the raw amino-acid sequence, 438 residues long: 23S rRNA (uracil(1939)-C(5))-methyltransferase RlmD (438 aa).

Positions 13 to 71 constitute a TRAM domain; sequence KAPLGPMQTYLVEGLTHEAKGVARLNGKVTFIEGALPGETVTAQVNKPGRRFDEAVLNA. Positions 84, 90, 93, and 167 each coordinate [4Fe-4S] cluster. S-adenosyl-L-methionine contacts are provided by Gln-271, Phe-300, Asn-305, Glu-321, Asp-348, and Asp-368. Cys-394 acts as the Nucleophile in catalysis.

Belongs to the class I-like SAM-binding methyltransferase superfamily. RNA M5U methyltransferase family. RlmD subfamily.

It catalyses the reaction uridine(1939) in 23S rRNA + S-adenosyl-L-methionine = 5-methyluridine(1939) in 23S rRNA + S-adenosyl-L-homocysteine + H(+). In terms of biological role, catalyzes the formation of 5-methyl-uridine at position 1939 (m5U1939) in 23S rRNA. This chain is 23S rRNA (uracil(1939)-C(5))-methyltransferase RlmD, found in Marinomonas posidonica (strain CECT 7376 / NCIMB 14433 / IVIA-Po-181).